The primary structure comprises 295 residues: ATP synthase gamma chain (295 aa).

The protein belongs to the ATPase gamma chain family. As to quaternary structure, F-type ATPases have 2 components, CF(1) - the catalytic core - and CF(0) - the membrane proton channel. CF(1) has five subunits: alpha(3), beta(3), gamma(1), delta(1), epsilon(1). CF(0) has three main subunits: a, b and c.

It is found in the cell inner membrane. In terms of biological role, produces ATP from ADP in the presence of a proton gradient across the membrane. The gamma chain is believed to be important in regulating ATPase activity and the flow of protons through the CF(0) complex. This Sulfurimonas denitrificans (strain ATCC 33889 / DSM 1251) (Thiomicrospira denitrificans (strain ATCC 33889 / DSM 1251)) protein is ATP synthase gamma chain.